Consider the following 67-residue polypeptide: Large ribosomal subunit protein bL35 (67 aa).

This sequence belongs to the bacterial ribosomal protein bL35 family.

In Acidiphilium cryptum (strain JF-5), this protein is Large ribosomal subunit protein bL35.